A 338-amino-acid chain; its full sequence is Transferrin receptor subunit ESAG7 (338 aa).

Positions 1–17 (MRFWFVLLALLGKEIYA) are cleaved as a signal peptide. 2 N-linked (GlcNAc...) asparagine glycosylation sites follow: Asn26 and Asn110. Disulfide bonds link Cys34/Cys161, Cys84/Cys311, Cys144/Cys215, and Cys230/Cys247. Asn234 carries N-linked (GlcNAc...) asparagine glycosylation.

Heterodimer composed of ESAG6 and ESAG7. Post-translationally, N-glycosylated. Glycosylation is dispensable for heterodimer formation and host transferrin binding.

The protein localises to the cell membrane. Its subcellular location is the flagellar pocket. Functionally, transferrin receptor subunit involved in receptor-mediated acquisition of iron from the environment by binding host TF/transferrin. In Trypanosoma brucei brucei, this protein is Transferrin receptor subunit ESAG7.